The primary structure comprises 64 residues: Large ribosomal subunit protein bL28 (64 aa).

The protein belongs to the bacterial ribosomal protein bL28 family.

The polypeptide is Large ribosomal subunit protein bL28 (Syntrophobacter fumaroxidans (strain DSM 10017 / MPOB)).